Consider the following 153-residue polypeptide: Small ribosomal subunit protein eS19 (153 aa).

Belongs to the eukaryotic ribosomal protein eS19 family. As to quaternary structure, part of the 30S ribosomal subunit.

In terms of biological role, may be involved in maturation of the 30S ribosomal subunit. The chain is Small ribosomal subunit protein eS19 from Aeropyrum pernix (strain ATCC 700893 / DSM 11879 / JCM 9820 / NBRC 100138 / K1).